An 852-amino-acid chain; its full sequence is Translation initiation factor IF-2 (852 aa).

A disordered region spans residues 1–240 (MEDKNKTIKE…KTSSDKRDFS (240 aa)). Positions 78–90 (KEVKYEESSRKQD) are enriched in basic and acidic residues. The span at 106–120 (VRPSGDSSYPVSRSP) shows a compositional bias: polar residues. Over residues 150 to 200 (RGPGQGGGYQGNRGPGQGGGYQGNRGPGQQTGPGNRFGGSGPGNRSGGPGG) the composition is skewed to gly residues. Residues 227–240 (HDKEKTSSDKRDFS) show a composition bias toward basic and acidic residues. The region spanning 347–516 (NRPPVVTIMG…LLQAEVMDLK (170 aa)) is the tr-type G domain. Residues 356 to 363 (GHVDHGKT) form a G1 region. Residue 356 to 363 (GHVDHGKT) participates in GTP binding. Residues 381–385 (GITQH) are G2. Residues 402-405 (DTPG) are G3. Residues 402–406 (DTPGH) and 456–459 (NKID) each bind GTP. A G4 region spans residues 456–459 (NKID). Residues 492 to 494 (SAR) form a G5 region.

The protein belongs to the TRAFAC class translation factor GTPase superfamily. Classic translation factor GTPase family. IF-2 subfamily.

The protein resides in the cytoplasm. Its function is as follows. One of the essential components for the initiation of protein synthesis. Protects formylmethionyl-tRNA from spontaneous hydrolysis and promotes its binding to the 30S ribosomal subunits. Also involved in the hydrolysis of GTP during the formation of the 70S ribosomal complex. The sequence is that of Translation initiation factor IF-2 from Leptospira borgpetersenii serovar Hardjo-bovis (strain JB197).